The primary structure comprises 392 residues: MFTKRHRITLLFNANKAYDRQVVEGVGEYLQASQSEWDIFIEEDFRARIDKIKDWLGDGVIADFDDKQIEQALADVDVPIVGVGGSYHLAESYPPVHYIATDNYALVESAFLHLKEKGVNRFAFYGLPESSGKRWATEREYAFRQLVAEEKYRGVVYQGLETAPENWQHAQNRLADWLQTLPPQTGIIAVTDARARHILQVCEHLHIPVPEKLCVIGIDNEELTRYLSRVALSSVAQGARQMGYQAAKLLHRLLDKEEMPLQRILVPPVRVIERRSTDYRSLTDPAVIQAMHYIRNHACKGIKVDQVLDAVGISRSNLEKRFKEEVGETIHAMIHAEKLEKARSLLISTTLSINEISQMCGYPSLQYFYSVFKKAYDTTPKEYRDVNSEVML.

The region spanning 288–386 is the HTH araC/xylS-type domain; it reads IQAMHYIRNH…DTTPKEYRDV (99 aa). 2 DNA-binding regions (H-T-H motif) span residues 305 to 326 and 353 to 376; these read DQVL…KEEV and INEI…KKAY.

Its function is as follows. Regulatory protein for the xylBAFGHR operon. This chain is Xylose operon regulatory protein (xylR), found in Escherichia coli O157:H7.